Here is a 354-residue protein sequence, read N- to C-terminus: UPF0324 membrane protein BL1094 (354 aa).

10 consecutive transmembrane segments (helical) span residues 12–33 (IATV…FASW), 43–65 (FGAL…SAYV), 86–108 (LLRL…TQGI), 112–129 (PIAA…YAIA), 138–160 (LAIL…LAGS), 175–197 (VTMA…IALG), 239–256 (LSRV…AIWW), 271–293 (VAFP…VPFV), 300–321 (LVDF…NVNF), and 331–353 (PMLA…AMLF).

The protein belongs to the UPF0324 family.

It localises to the cell membrane. The protein is UPF0324 membrane protein BL1094 of Bifidobacterium longum (strain NCC 2705).